Reading from the N-terminus, the 145-residue chain is Lipoprotein signal peptidase (145 aa).

Transmembrane regions (helical) follow at residues 1 to 21 (MVYI…LLVM), 57 to 77 (YLFI…YYKT), and 79 to 99 (GSGM…GNLI). Active-site residues include Asp109 and Asp123. The chain crosses the membrane as a helical span at residues 115 to 135 (IWPVFNLADSSVVIGAALLIL).

This sequence belongs to the peptidase A8 family.

The protein localises to the cell inner membrane. The catalysed reaction is Release of signal peptides from bacterial membrane prolipoproteins. Hydrolyzes -Xaa-Yaa-Zaa-|-(S,diacylglyceryl)Cys-, in which Xaa is hydrophobic (preferably Leu), and Yaa (Ala or Ser) and Zaa (Gly or Ala) have small, neutral side chains.. Its pathway is protein modification; lipoprotein biosynthesis (signal peptide cleavage). Its function is as follows. This protein specifically catalyzes the removal of signal peptides from prolipoproteins. The polypeptide is Lipoprotein signal peptidase (Halothermothrix orenii (strain H 168 / OCM 544 / DSM 9562)).